A 103-amino-acid polypeptide reads, in one-letter code: Large ribosomal subunit protein eL14 (103 aa).

Belongs to the eukaryotic ribosomal protein eL14 family.

This chain is Large ribosomal subunit protein eL14, found in Pyrobaculum aerophilum (strain ATCC 51768 / DSM 7523 / JCM 9630 / CIP 104966 / NBRC 100827 / IM2).